Reading from the N-terminus, the 158-residue chain is Endoribonuclease YbeY (158 aa).

The Zn(2+) site is built by His117, His121, and His127.

The protein belongs to the endoribonuclease YbeY family. It depends on Zn(2+) as a cofactor.

Its subcellular location is the cytoplasm. Its function is as follows. Single strand-specific metallo-endoribonuclease involved in late-stage 70S ribosome quality control and in maturation of the 3' terminus of the 16S rRNA. This Buchnera aphidicola subsp. Schizaphis graminum (strain Sg) protein is Endoribonuclease YbeY.